A 312-amino-acid chain; its full sequence is Malate dehydrogenase (312 aa).

NAD(+) contacts are provided by residues 7-13 and aspartate 34; that span reads GAAGGIG. Substrate is bound by residues arginine 81 and arginine 87. Residues asparagine 94 and 117–119 each bind NAD(+); that span reads ITN. Substrate is bound by residues asparagine 119 and arginine 153. Histidine 177 functions as the Proton acceptor in the catalytic mechanism. Methionine 227 lines the NAD(+) pocket.

This sequence belongs to the LDH/MDH superfamily. MDH type 1 family. Homodimer.

The catalysed reaction is (S)-malate + NAD(+) = oxaloacetate + NADH + H(+). Catalyzes the reversible oxidation of malate to oxaloacetate. The polypeptide is Malate dehydrogenase (Cronobacter sakazakii (strain ATCC BAA-894) (Enterobacter sakazakii)).